A 154-amino-acid chain; its full sequence is Aspartate carbamoyltransferase regulatory chain (154 aa).

Zn(2+)-binding residues include Cys109, Cys114, Cys138, and Cys141.

This sequence belongs to the PyrI family. In terms of assembly, contains catalytic and regulatory chains. Requires Zn(2+) as cofactor.

Involved in allosteric regulation of aspartate carbamoyltransferase. This Pectobacterium carotovorum subsp. carotovorum (strain PC1) protein is Aspartate carbamoyltransferase regulatory chain.